A 556-amino-acid polypeptide reads, in one-letter code: Formate--tetrahydrofolate ligase (556 aa).

65 to 72 (TPAGEGKS) provides a ligand contact to ATP.

It belongs to the formate--tetrahydrofolate ligase family.

The enzyme catalyses (6S)-5,6,7,8-tetrahydrofolate + formate + ATP = (6R)-10-formyltetrahydrofolate + ADP + phosphate. The protein operates within one-carbon metabolism; tetrahydrofolate interconversion. The polypeptide is Formate--tetrahydrofolate ligase (Streptococcus pneumoniae (strain Hungary19A-6)).